A 67-amino-acid chain; its full sequence is Ayadualin (67 aa).

The signal sequence occupies residues 1-20; sequence MNKIILFSAVFLALVFCAEA. Residues 35-54 are compositionally biased toward acidic residues; sequence PDDTVDIDEGLPDAFDEDYE. Positions 35–67 are disordered; the sequence is PDDTVDIDEGLPDAFDEDYEQDGHNPYPCRGDC. The short motif at 64-66 is the Integrin-binding motif element; the sequence is RGD.

As to expression, salivary gland.

Its subcellular location is the secreted. Its function is as follows. Inhibits collagen- and ADP-induced host platelet aggregation by blocking the binding of host integrin alpha-IIb/beta-3 (ITGA2B/ITGB3) to fibrinogen. Inhibits the intrinsic blood coagulation pathway in the host by blocking the activity of host coagulation factor XIIa (F12). This chain is Ayadualin, found in Lutzomyia ayacuchensis (Sand fly).